A 536-amino-acid chain; its full sequence is CTP synthase (536 aa).

Positions Met-1–Leu-267 are amidoligase domain. Ser-13 lines the CTP pocket. Ser-13 contributes to the UTP binding site. Ser-14 to Ile-19 provides a ligand contact to ATP. Tyr-54 is an L-glutamine binding site. Asp-71 provides a ligand contact to ATP. Asp-71 and Glu-141 together coordinate Mg(2+). Residues Asp-148 to Glu-150, Lys-188 to Gln-193, and Lys-224 each bind CTP. UTP is bound by residues Lys-188 to Gln-193 and Lys-224. ATP is bound at residue Arg-240–Ala-242. The Glutamine amidotransferase type-1 domain maps to Thr-293–Asn-535. An L-glutamine-binding site is contributed by Gly-355. Cys-382 acts as the Nucleophile; for glutamine hydrolysis in catalysis. L-glutamine-binding positions include Leu-383–Gln-386, Glu-406, and Arg-463. Active-site residues include His-508 and Glu-510.

Belongs to the CTP synthase family. In terms of assembly, homotetramer.

The enzyme catalyses UTP + L-glutamine + ATP + H2O = CTP + L-glutamate + ADP + phosphate + 2 H(+). It carries out the reaction L-glutamine + H2O = L-glutamate + NH4(+). It catalyses the reaction UTP + NH4(+) + ATP = CTP + ADP + phosphate + 2 H(+). It participates in pyrimidine metabolism; CTP biosynthesis via de novo pathway; CTP from UDP: step 2/2. With respect to regulation, allosterically activated by GTP, when glutamine is the substrate; GTP has no effect on the reaction when ammonia is the substrate. The allosteric effector GTP functions by stabilizing the protein conformation that binds the tetrahedral intermediate(s) formed during glutamine hydrolysis. Inhibited by the product CTP, via allosteric rather than competitive inhibition. Functionally, catalyzes the ATP-dependent amination of UTP to CTP with either L-glutamine or ammonia as the source of nitrogen. Regulates intracellular CTP levels through interactions with the four ribonucleotide triphosphates. The polypeptide is CTP synthase (Staphylococcus aureus (strain NCTC 8325 / PS 47)).